The sequence spans 315 residues: Tryptophan prenyltransferase ComQ (315 aa).

Mg(2+)-binding residues include Asp95 and Asp99.

This sequence belongs to the FPP/GGPP synthase family. Mg(2+) serves as cofactor.

It is found in the cell membrane. It carries out the reaction L-tryptophyl-[protein] + (2E,6E)-farnesyl diphosphate = (2S,3R)-3-farnesyl-2,3-dihydro-2,N(alpha)-cyclo-L-tryptophyl-[protein] + diphosphate. Part of a major quorum-sensing system that regulates the development of genetic competence. Involved in the maturation of the competence pheromone ComX. Acts by catalyzing the transfer of a farnesyl group on the ComX pheromone. In vitro, can also catalyze the farnesylation of single tryptophan and tryptophan derivatives. The chain is Tryptophan prenyltransferase ComQ from Bacillus subtilis subsp. natto (strain BEST195).